Reading from the N-terminus, the 160-residue chain is Oocyte-secreted protein 4B (160 aa).

Positions 1 to 13 (MKTSVLLAITAMC) are cleaved as a signal peptide.

The protein belongs to the PLAC1 family.

The protein resides in the secreted. In Homo sapiens (Human), this protein is Oocyte-secreted protein 4B.